The sequence spans 119 residues: MARVKRGVVARRRHKKVLKAAKGYYGARSRVFRVAKQAVIKAGQYAYRDRRVKKRNFRALWITRINAQSRAEGLSYSRLIAGLKKASIALDRRVLADLAIHDKTAFAAIVAKAQEALAA.

The protein belongs to the bacterial ribosomal protein bL20 family.

In terms of biological role, binds directly to 23S ribosomal RNA and is necessary for the in vitro assembly process of the 50S ribosomal subunit. It is not involved in the protein synthesizing functions of that subunit. The polypeptide is Large ribosomal subunit protein bL20 (Saccharophagus degradans (strain 2-40 / ATCC 43961 / DSM 17024)).